The chain runs to 323 residues: Aspartate carbamoyltransferase catalytic subunit (323 aa).

Residues arginine 61 and threonine 62 each coordinate carbamoyl phosphate. Position 89 (lysine 89) interacts with L-aspartate. The carbamoyl phosphate site is built by arginine 111, histidine 144, and glutamine 147. Residues arginine 184 and arginine 238 each contribute to the L-aspartate site. 2 residues coordinate carbamoyl phosphate: glycine 279 and proline 280.

This sequence belongs to the aspartate/ornithine carbamoyltransferase superfamily. ATCase family. Heterododecamer (2C3:3R2) of six catalytic PyrB chains organized as two trimers (C3), and six regulatory PyrI chains organized as three dimers (R2).

The catalysed reaction is carbamoyl phosphate + L-aspartate = N-carbamoyl-L-aspartate + phosphate + H(+). It functions in the pathway pyrimidine metabolism; UMP biosynthesis via de novo pathway; (S)-dihydroorotate from bicarbonate: step 2/3. In terms of biological role, catalyzes the condensation of carbamoyl phosphate and aspartate to form carbamoyl aspartate and inorganic phosphate, the committed step in the de novo pyrimidine nucleotide biosynthesis pathway. The polypeptide is Aspartate carbamoyltransferase catalytic subunit (Acaryochloris marina (strain MBIC 11017)).